Consider the following 387-residue polypeptide: TSC22 domain family protein 4 (387 aa).

Disordered stretches follow at residues 1 to 85 (MSGG…GEPY) and 135 to 232 (ISTP…RRDG). Over residues 28–51 (SDPPAPPAPAGPPPRLPNGEPNPD) the composition is skewed to pro residues. Thr-57 carries the post-translational modification Phosphothreonine. Phosphoserine is present on residues Ser-62 and Ser-165. Thr-183 is modified (phosphothreonine). 2 positions are modified to phosphoserine: Ser-187 and Ser-189. Thr-223 bears the Phosphothreonine mark. Ser-254, Ser-258, and Ser-271 each carry phosphoserine. The tract at residues 336 to 357 (LKEQIRDLAERNAALEQENGLL) is leucine-zipper. The residue at position 362 (Ser-362) is a Phosphoserine. The segment at 368-387 (QLPSSGLPRLGPSAPNGPSI) is disordered.

The protein belongs to the TSC-22/Dip/Bun family. In terms of assembly, forms a homodimer or heterodimer. Forms a heterodimer with TSC22D1 isoforms 1 and 2. Interacts with NRBP1.

Its subcellular location is the nucleus. The protein resides in the cytoplasm. The protein localises to the cell projection. It is found in the dendrite. It localises to the synapse. Binds DNA and acts as a transcriptional repressor. Involved in the regulation of systematic glucose homeostasis and insulin sensitivity, via transcriptional repression of downstream insulin signaling targets such as OBP2A/LCN13. Acts as a negative regulator of lipogenic gene expression in hepatocytes and thereby mediates the control of very low-density lipoprotein release. May play a role in neurite elongation and survival. The chain is TSC22 domain family protein 4 from Rattus norvegicus (Rat).